The following is a 246-amino-acid chain: Glutamate/aspartate import permease protein GltJ (246 aa).

Positions 29 to 230 (FQVTIALSIC…LINAFIMLVM (202 aa)) constitute an ABC transmembrane type-1 domain. 5 consecutive transmembrane segments (helical) span residues 33 to 53 (IALS…FGIL), 74 to 94 (NVPL…LLPE), 104 to 124 (LDPN…FTAA), 179 to 196 (LVKN…DMAA), and 212 to 232 (FTAI…VMTL).

The protein belongs to the binding-protein-dependent transport system permease family. HisMQ subfamily. As to quaternary structure, the complex is composed of two ATP-binding proteins (GltL), two transmembrane proteins (GltJ and GltK) and a solute-binding protein (GltI).

The protein localises to the cell inner membrane. In terms of biological role, part of the ABC transporter complex GltIJKL involved in glutamate and aspartate uptake. Probably responsible for the translocation of the substrate across the membrane. This chain is Glutamate/aspartate import permease protein GltJ (gltJ), found in Escherichia coli O6:H1 (strain CFT073 / ATCC 700928 / UPEC).